A 172-amino-acid chain; its full sequence is YTGIGVYLEDKAVPSLAAKWKGKTSEELVHTLHFYRDIISGPFEKLIRGSKILPLAGAEYSKKVMENCVAHMKSVGTYGDAEAAAIEKFAEAFKNVNFAPGPLFLYRQSPDGILGLSFSEDVTIPEKEAAVIENKAVSAAVLETMIGEHAVSPDLKRILASRLLRIEHGIIV.

The substrate site is built by Thr2, Asn67, and Thr144.

This sequence belongs to the chalcone isomerase family.

The catalysed reaction is a chalcone = a flavanone.. The protein operates within secondary metabolite biosynthesis; flavonoid biosynthesis. Functionally, catalyzes the intramolecular cyclization of bicyclic chalcones into tricyclic (S)-flavanones. Responsible for the isomerization of 4,2',4',6'-tetrahydroxychalcone (also termed chalcone) into naringenin. In Glycine max (Soybean), this protein is Chalcone--flavanone isomerase 1 (CHI1).